A 240-amino-acid polypeptide reads, in one-letter code: Thiopurine S-methyltransferase (240 aa).

Residue 24-35 coordinates S-adenosyl-L-methionine; sequence WKDKWVTRHISF. F35 is a substrate binding site. K53 bears the N6-acetyllysine mark. S-adenosyl-L-methionine contacts are provided by residues L64, E85, 129-130, and R147; that span reads SI.

The protein belongs to the class I-like SAM-binding methyltransferase superfamily. TPMT family. As to quaternary structure, monomer.

The protein localises to the cytoplasm. It carries out the reaction S-adenosyl-L-methionine + a thiopurine = S-adenosyl-L-homocysteine + a thiopurine S-methylether.. It catalyses the reaction mercaptopurine + S-adenosyl-L-methionine = 6-methylthiopurine + S-adenosyl-L-homocysteine + H(+). Catalyzes the S-methylation of thiopurine drugs such as 6-mercaptopurine (also called mercaptopurine, 6-MP or its brand name Purinethol) using S-adenosyl-L-methionine as the methyl donor. TPMT activity modulates the cytotoxic effects of thiopurine prodrugs. A natural substrate for this enzyme has yet to be identified. The chain is Thiopurine S-methyltransferase (Tpmt) from Mus spretus (Western Mediterranean mouse).